We begin with the raw amino-acid sequence, 122 residues long: Large ribosomal subunit protein uL14 (122 aa).

It belongs to the universal ribosomal protein uL14 family. Part of the 50S ribosomal subunit. Forms a cluster with proteins L3 and L19. In the 70S ribosome, L14 and L19 interact and together make contacts with the 16S rRNA in bridges B5 and B8.

Its function is as follows. Binds to 23S rRNA. Forms part of two intersubunit bridges in the 70S ribosome. The polypeptide is Large ribosomal subunit protein uL14 (Gluconacetobacter diazotrophicus (strain ATCC 49037 / DSM 5601 / CCUG 37298 / CIP 103539 / LMG 7603 / PAl5)).